A 372-amino-acid chain; its full sequence is tRNA-specific 2-thiouridylase MnmA (372 aa).

ATP is bound by residues 9–16 (GMSGGVDS) and methionine 35. Residues 95-97 (NPD) are interaction with target base in tRNA. The Nucleophile role is filled by cysteine 100. The cysteines at positions 100 and 201 are disulfide-linked. Residue glycine 124 coordinates ATP. The segment at 151–153 (KDQ) is interaction with tRNA. Cysteine 201 serves as the catalytic Cysteine persulfide intermediate. An interaction with tRNA region spans residues 317–318 (RY).

This sequence belongs to the MnmA/TRMU family.

The protein localises to the cytoplasm. It carries out the reaction S-sulfanyl-L-cysteinyl-[protein] + uridine(34) in tRNA + AH2 + ATP = 2-thiouridine(34) in tRNA + L-cysteinyl-[protein] + A + AMP + diphosphate + H(+). In terms of biological role, catalyzes the 2-thiolation of uridine at the wobble position (U34) of tRNA, leading to the formation of s(2)U34. This chain is tRNA-specific 2-thiouridylase MnmA, found in Herminiimonas arsenicoxydans.